The following is a 186-amino-acid chain: Ribosome-recycling factor (186 aa).

It belongs to the RRF family.

It localises to the cytoplasm. Its function is as follows. Responsible for the release of ribosomes from messenger RNA at the termination of protein biosynthesis. May increase the efficiency of translation by recycling ribosomes from one round of translation to another. In Nitratidesulfovibrio vulgaris (strain DP4) (Desulfovibrio vulgaris), this protein is Ribosome-recycling factor.